The sequence spans 312 residues: Serine/threonine-protein phosphatase PP1 isozyme 5 (312 aa).

Residue Ala-2 is modified to N-acetylalanine. Mn(2+) is bound by residues Asp-70, His-72, Asp-98, and Asn-130. Catalysis depends on His-131, which acts as the Proton donor. His-179 and His-254 together coordinate Mn(2+).

This sequence belongs to the PPP phosphatase family. PP-1 subfamily. The cofactor is Mn(2+).

Its subcellular location is the nucleus. It is found in the cytoplasm. The catalysed reaction is O-phospho-L-seryl-[protein] + H2O = L-seryl-[protein] + phosphate. It catalyses the reaction O-phospho-L-threonyl-[protein] + H2O = L-threonyl-[protein] + phosphate. With respect to regulation, phosphatase activity is strongly reduced by the protein phosphatase inhibitor 2 (I-2). Its function is as follows. Serine/threonine-protein phosphatase that possesses phosphatase activity toward para-nitrophenyl phosphate (pNPP) in vitro. This chain is Serine/threonine-protein phosphatase PP1 isozyme 5, found in Arabidopsis thaliana (Mouse-ear cress).